The following is a 532-amino-acid chain: Phosphoenolpyruvate carboxykinase (ATP) (532 aa).

Substrate is bound by residues arginine 60, tyrosine 194, and lysine 200. ATP-binding positions include lysine 200, histidine 219, and 237–245 (GLSGTGKTT). The Mn(2+) site is built by lysine 200 and histidine 219. Aspartate 258 contacts Mn(2+). Positions 286, 324, and 449 each coordinate ATP. Substrate is bound at residue arginine 324.

This sequence belongs to the phosphoenolpyruvate carboxykinase (ATP) family. Mn(2+) is required as a cofactor.

It localises to the cytoplasm. It carries out the reaction oxaloacetate + ATP = phosphoenolpyruvate + ADP + CO2. It functions in the pathway carbohydrate biosynthesis; gluconeogenesis. In terms of biological role, involved in the gluconeogenesis. Catalyzes the conversion of oxaloacetate (OAA) to phosphoenolpyruvate (PEP) through direct phosphoryl transfer between the nucleoside triphosphate and OAA. This chain is Phosphoenolpyruvate carboxykinase (ATP), found in Cereibacter sphaeroides (strain ATCC 17025 / ATH 2.4.3) (Rhodobacter sphaeroides).